The chain runs to 146 residues: Large ribosomal subunit protein uL13 (146 aa).

This sequence belongs to the universal ribosomal protein uL13 family. Part of the 50S ribosomal subunit.

This protein is one of the early assembly proteins of the 50S ribosomal subunit, although it is not seen to bind rRNA by itself. It is important during the early stages of 50S assembly. The sequence is that of Large ribosomal subunit protein uL13 from Spiroplasma citri.